The following is a 547-amino-acid chain: Probable high-affinity hexose transporter ght8, mitochondrial (547 aa).

A mitochondrion-targeting transit peptide spans 1–21; the sequence is MGKTLTIVMLVFVSMAGWMFG. Topologically, residues 22–86 are mitochondrial intermembrane; sequence ADTGSIGGIT…SPLMDRIGKR (65 aa). The helical transmembrane segment at 87 to 107 threads the bilayer; that stretch reads VSIMFWTIVYLIGIILQVTAV. The Cytoplasmic segment spans residues 108–112; sequence PSWVQ. A helical membrane pass occupies residues 113 to 133; it reads IMVAKIWTGLAIGALSVLAPG. Residues 134–144 lie on the Mitochondrial intermembrane side of the membrane; that stretch reads FQSEVAPATLR. The helical transmembrane segment at 145-165 threads the bilayer; it reads GTIVTTYQLAVTGGIFIAACI. The Cytoplasmic segment spans residues 166–179; sequence NMGTHKLHKTAQWR. Residues 180-200 traverse the membrane as a helical segment; it reads VSMGINLLWGIIMFIGISFLP. The Mitochondrial intermembrane portion of the chain corresponds to 201 to 304; sequence ESPRYLIAIG…TGMNSPYLSA (104 aa). A helical transmembrane segment spans residues 305–325; the sequence is LILDAVNFGCTFGGLFVLEFF. Residues 326–328 are Cytoplasmic-facing; sequence GRR. The helical transmembrane segment at 329-349 threads the bilayer; the sequence is MPLIIGGVWQSITFFIYAAVG. Residues 350 to 363 are Mitochondrial intermembrane-facing; it reads NRALTRKNGTSNHR. A helical membrane pass occupies residues 364-384; the sequence is AGAVMIVFSCLFIFSFAQTWG. Residues 385–404 are Cytoplasmic-facing; it reads PAAYVIVGESYPIRYRSKCA. Residues 405–425 traverse the membrane as a helical segment; it reads AVATTGNWLWGFLITFFTPFI. The Mitochondrial intermembrane portion of the chain corresponds to 426 to 432; that stretch reads SDSIGFK. Residues 433 to 453 traverse the membrane as a helical segment; the sequence is YGYIFAACNLCAACIIFLFAH. The Cytoplasmic segment spans residues 454–547; it reads ETKGLTLEEI…NYVDEQDRYA (94 aa). Residues 482 to 547 form a disordered region; sequence GQAAKQQQEV…NYVDEQDRYA (66 aa). Over residues 517 to 529 the composition is skewed to low complexity; sequence TSSNDITSSTSSS. Ser-519 carries the post-translational modification Phosphoserine. A phosphothreonine mark is found at Thr-523 and Thr-526. Phosphoserine is present on residues Ser-527, Ser-528, Ser-529, and Ser-537.

Belongs to the major facilitator superfamily. Sugar transporter (TC 2.A.1.1) family.

It localises to the mitochondrion membrane. The protein is Probable high-affinity hexose transporter ght8, mitochondrial (ght8) of Schizosaccharomyces pombe (strain 972 / ATCC 24843) (Fission yeast).